Reading from the N-terminus, the 335-residue chain is Methionine import ATP-binding protein MetN (335 aa).

The 240-residue stretch at 2-241 (IQFQRLHKSY…PQHPTTRRFV (240 aa)) folds into the ABC transporter domain. 38 to 45 (GHSGAGKS) is a binding site for ATP.

This sequence belongs to the ABC transporter superfamily. Methionine importer (TC 3.A.1.24) family. The complex is composed of two ATP-binding proteins (MetN), two transmembrane proteins (MetI) and a solute-binding protein (MetQ).

It localises to the cell inner membrane. The catalysed reaction is L-methionine(out) + ATP + H2O = L-methionine(in) + ADP + phosphate + H(+). It catalyses the reaction D-methionine(out) + ATP + H2O = D-methionine(in) + ADP + phosphate + H(+). Functionally, part of the ABC transporter complex MetNIQ involved in methionine import. Responsible for energy coupling to the transport system. This chain is Methionine import ATP-binding protein MetN, found in Xanthomonas campestris pv. campestris (strain 8004).